The primary structure comprises 589 residues: BTB/POZ domain and ankyrin repeat-containing protein NPR3 (589 aa).

Residues methionine 1–aspartate 25 form a disordered region. Over residues proline 13–alanine 22 the composition is skewed to pro residues. In terms of domain architecture, BTB spans alanine 52–proline 137. The C2HC NPR-type zinc-finger motif lies at alanine 140–arginine 154. The Zn(2+) site is built by cysteine 143, cysteine 148, histidine 150, and cysteine 153. ANK repeat units follow at residues lysine 260–aspartate 290, phenylalanine 292–leucine 319, and serine 323–glutamate 352. A salicylic acid-binding core (SBC) region spans residues glutamate 382–threonine 521. Salicylate is bound at residue arginine 433. Residues aspartate 555–arginine 589 are disordered. Over residues alanine 558–serine 571 the composition is skewed to low complexity. The segment covering proline 580–arginine 589 has biased composition (basic residues).

This sequence belongs to the plant 'ANKYRIN-BTB/POZ' family. 'NPR1-like' subfamily. Interacts with TGA2.1, TGA2.2, TGA2.3, LG2, TGAL1, TGAL4, NRR, RH1, RH2 and RH3.

The protein localises to the nucleus. Its pathway is protein modification; protein ubiquitination. Salicylic acid (SA)-binding substrate-specific adapter of an E3 ubiquitin-protein ligase complex (CUL3-RBX1-BTB) which mediates the ubiquitination and subsequent proteasomal degradation of target proteins. Involved in defense response against the bacterial blight disease caused by Xanthomonas oryzae pv. oryzae (Xoo). Plants expressing an NPR3/NH3 transgene driven by its native promoter show enhanced resistance to the Xoo pathogen, and exhibit elevated sensitivity to benzothiadiazole (BTH) treatment and enhanced induction of defense-related genes upon treatment with BTH. Intriguingly, constitutive over-expression of NPR3/NH3 with a ubiquitin promoter does not confer disease resistance to Xoo. The protein is BTB/POZ domain and ankyrin repeat-containing protein NPR3 of Oryza sativa subsp. japonica (Rice).